Here is a 786-residue protein sequence, read N- to C-terminus: MLERTLRVLEYDKVKEQLLEHTASSLGRDKVKRLMPSTDFEEIVEMQDTTDEAAKVIRLKGHAPLGGIFDIRSNVKRAKIGSMLSPHELLDIASTMYGSRQMKRFIEDIVDNGAQLPILETHVAQIVSLYDLEKKITGCIGDGGEVLDSASDKLRGIRNQIRTAESRIREKLENMTRSSNAQKMLSDAIVTIRNDRYVIPVKQEYRGVYGGIVHDQSASGQTLFIEPQVIVELNNALQEARVKEKQEVERILMMLTEEVAAEADIVLANVEVIANLDFIFAKALYAKRMKATKPIVNNERYMELRQARHPLIDPKVIVPNDIVLGKDFTTIVITGPNTGGKTVTLKTVGICVLMAQSGLHIPVQEESEICVFKNIFADIGDEQSIEQSLSTFSSHMVNIVDILEKADFESLVLFDELGAGTDPQEGAALAISILDEVHNRGARVVATTHYPELKAYGYNRNQVINASVEFDVNTLSPTYKLLIGVPGRSNAFEISKRLGLSERVINRARNHISTDTNKIENMIAKLEESQKNAERDWKEAEELRKQSEKLHRELQRQIIEFNEERDERLLKAQKEGEEKVEAAKKEAEAIIRELRQLRKAQLANVKDHELIEAKSRLEGAAPELVKKQKVKVKNTAPKQQLRPGDEVKVLTFGQKGQLLKKVSDSEWNVQIGILKMKVKESDMEYINTPKQLEKKAVATVKGRDYHVSLELDLRGERFENAMMRVEKYLDDAQLANYPRVSIIHGKGTGALRQGVQDYLKNHRGVKSFRYGDMGEGGLGVTVVELK.

335 to 342 (GPNTGGKT) contacts ATP. In terms of domain architecture, Smr spans 711–786 (LDLRGERFEN…GLGVTVVELK (76 aa)).

It belongs to the DNA mismatch repair MutS family. MutS2 subfamily. Homodimer. Binds to stalled ribosomes, contacting rRNA.

Endonuclease that is involved in the suppression of homologous recombination and thus may have a key role in the control of bacterial genetic diversity. In terms of biological role, acts as a ribosome collision sensor, splitting the ribosome into its 2 subunits. Detects stalled/collided 70S ribosomes which it binds and splits by an ATP-hydrolysis driven conformational change. Acts upstream of the ribosome quality control system (RQC), a ribosome-associated complex that mediates the extraction of incompletely synthesized nascent chains from stalled ribosomes and their subsequent degradation. Probably generates substrates for RQC. In Bacillus cytotoxicus (strain DSM 22905 / CIP 110041 / 391-98 / NVH 391-98), this protein is Endonuclease MutS2.